The following is a 2748-amino-acid chain: Nuclear migration protein NUM1 (2748 aa).

The segment covering 1–10 (MSHNNRHKKN) has biased composition (basic residues). Disordered stretches follow at residues 1–36 (MSHNNRHKKNNDKDSSAGQYANSIDNSLSQESVSTN) and 290–312 (YYQKQHTSDTTVTSDPDSEGTTS). The segment covering 17–36 (AGQYANSIDNSLSQESVSTN) has biased composition (polar residues). Low complexity predominate over residues 293–304 (KQHTSDTTVTSD). Tandem repeats lie at residues 593–656 (PSLE…KLEQ), 657–727 (PSLE…EVEQ), 728–798 (PSLA…EVEQ), 799–862 (PSLA…KLEQ), 863–926 (PSLA…KLEQ), 927–990 (PSLA…KLEQ), 991–1054 (PSLE…KLEQ), 1055–1118 (PSLE…KLEQ), 1119–1182 (PSLE…KLEQ), 1183–1246 (PSLA…KLEQ), 1247–1310 (PSLA…KLEQ), and 1311–1374 (PSLE…KLEQ). Residues 593–1384 (PSLEYLVEHA…PSLEYLVKHA (792 aa)) form a 13 X tandem repeats region. Phosphoserine occurs at positions 611, 675, and 746. Ser881, Ser945, and Ser1009 each carry phosphoserine. Ser1201, Ser1265, and Ser1329 each carry phosphoserine. The 13; truncated repeat unit spans residues 1375 to 1384 (PSLEYLVKHA). The segment at 2111 to 2133 (ERAERIDEQSINTTSSNSTTTSS) is disordered. A compositionally biased stretch (low complexity) spans 2122–2133 (NTTSSNSTTTSS). Residues Ser2162, Ser2164, Ser2197, Ser2217, Ser2220, Ser2221, Ser2360, and Ser2424 each carry the phosphoserine modification. Basic and acidic residues predominate over residues 2444–2460 (KEDKKGQATASKHEYVS). The tract at residues 2444–2536 (KEDKKGQATA…HSSRNTPASR (93 aa)) is disordered. Residues 2465–2474 (NKTSTVSTKS) are compositionally biased toward polar residues. Residues 2492–2503 (SESHPQIEEQSH) show a composition bias toward basic and acidic residues. Ser2494 carries the post-translational modification Phosphoserine. Over residues 2504–2514 (RTNHHKHHKRQ) the composition is skewed to basic residues. Residues 2516–2532 (SLNSNSTSKTTHSSRNT) show a composition bias toward low complexity. A Phosphoserine modification is found at Ser2545. The 111-residue stretch at 2573–2683 (QTVIGEYLFK…WYNSLRYLLQ (111 aa)) folds into the PH domain. The interval 2707–2748 (IFPLPGENTKSSSKRLSASRRSVSTRSLRHRVPQSRSFGNLR) is disordered. Positions 2720–2730 (KRLSASRRSVS) are enriched in low complexity.

As to quaternary structure, interacts with PAC11 when DYN1 is present, and TUB3.

It is found in the bud tip. Functionally, controls nuclear migration. NUM1 specifically controls the interaction of the bud neck cytoskeleton with the pre-divisional G2 nucleus. Functions in dynein-anchoring. During late anaphase forms dynein-interacting cortical microtubule capture sites at both cellular poles. This leads to dynein-dependent sliding of the microtubules in the bud. This is Nuclear migration protein NUM1 (NUM1) from Saccharomyces cerevisiae (strain ATCC 204508 / S288c) (Baker's yeast).